Consider the following 57-residue polypeptide: uncharacterized protein (57 aa).

The chain crosses the membrane as a helical span at residues 4 to 26 (FMPIRVFLYSYVIINSLLSSFFH).

The protein localises to the membrane. This is an uncharacterized protein from Saccharomyces cerevisiae (strain ATCC 204508 / S288c) (Baker's yeast).